Here is a 344-residue protein sequence, read N- to C-terminus: uncharacterized protein (344 aa).

6 consecutive transmembrane segments (helical) span residues 155 to 175 (IARI…IFLV), 181 to 201 (WGLG…AYGW), 221 to 241 (LSFI…VNGF), 254 to 274 (ISSF…FALL), 291 to 311 (FTII…AAYV), and 319 to 339 (ALQN…IGVF).

The protein to M.jannaschii MJ1032.

Its subcellular location is the cell membrane. This is an uncharacterized protein from Archaeoglobus fulgidus (strain ATCC 49558 / DSM 4304 / JCM 9628 / NBRC 100126 / VC-16).